The primary structure comprises 213 residues: Large ribosomal subunit protein eL14 (213 aa).

Lys-79 is subject to N6-acetyllysine. N6-acetyllysine; alternate is present on Lys-85. The residue at position 85 (Lys-85) is an N6-succinyllysine; alternate. Residue Lys-124 forms a Glycyl lysine isopeptide (Lys-Gly) (interchain with G-Cter in SUMO2) linkage. Ser-139 bears the Phosphoserine mark. The interval 166–213 (TAGKKAPAQKAPAQKAAGQKAAPPPKAQKVQKPPAQKAPAPKASGEKA) is disordered. The 1-1; approximate repeat unit spans residues 169–173 (KKAPA). Positions 169-188 (KKAPAQKAPAQKAAGQKAAP) are 4 X 5 AA tandem repeats of Q-K-A-[APS]-X. 5 repeat units span residues 174 to 178 (QKAPA), 179 to 183 (QKAAG), 184 to 188 (QKAAP), 191 to 193 (KAQ), and 194 to 196 (KVQ). The interval 191–196 (KAQKVQ) is 2 X 3 AA tandem repeats of K-G-Q. At Lys-202 the chain carries N6-succinyllysine.

Belongs to the eukaryotic ribosomal protein eL14 family. Component of the large ribosomal subunit.

It localises to the cytoplasm. Its function is as follows. Component of the large ribosomal subunit. The ribosome is a large ribonucleoprotein complex responsible for the synthesis of proteins in the cell. This chain is Large ribosomal subunit protein eL14 (RPL14), found in Sus scrofa (Pig).